The chain runs to 260 residues: MNNIHKTAIIEEGAILGDNITIGAFTIIGKNVKIGDGTIIDSHTLIDGKTTIGKNNHIFSHASIGTIPQDLKFNGEDVELIIGDNNKIREYTLFNPGTIGGGSVTKIGSNNLFMGYVHVAHDCIIGDNCIFANGATLAGHVECDDFVVVGGLTPIHQFCKIGTQVMIGGASAVAQDIPPFCLAEGNKAVLRGLNLTGLRRRFDNREDIDAIKHAYRELFEVGKPLQDVARELLDNDKNKYVKELASFVLNTKRGIPFNRK.

It belongs to the transferase hexapeptide repeat family. LpxA subfamily. In terms of assembly, homotrimer.

The protein resides in the cytoplasm. The catalysed reaction is a (3R)-hydroxyacyl-[ACP] + UDP-N-acetyl-alpha-D-glucosamine = a UDP-3-O-[(3R)-3-hydroxyacyl]-N-acetyl-alpha-D-glucosamine + holo-[ACP]. It participates in glycolipid biosynthesis; lipid IV(A) biosynthesis; lipid IV(A) from (3R)-3-hydroxytetradecanoyl-[acyl-carrier-protein] and UDP-N-acetyl-alpha-D-glucosamine: step 1/6. Functionally, involved in the biosynthesis of lipid A, a phosphorylated glycolipid that anchors the lipopolysaccharide to the outer membrane of the cell. The sequence is that of Acyl-[acyl-carrier-protein]--UDP-N-acetylglucosamine O-acyltransferase from Aliarcobacter butzleri (strain RM4018) (Arcobacter butzleri).